Here is a 354-residue protein sequence, read N- to C-terminus: Gibberellin receptor GID1 (354 aa).

The short motif at 120-122 is the Involved in the stabilization of the negatively charged intermediate by the formation of the oxyanion hole element; it reads HGG. Gibberellin A3-binding positions include 122 to 123, Tyr134, Ser198, and Asp250; that span reads GS. Residues 122 to 123, Tyr134, and Ser198 contribute to the gibberellin A4 site; that span reads GS. Ser198 is a catalytic residue. Asp296 is a catalytic residue. Gly327 contacts gibberellin A3. Residue Gly327 coordinates gibberellin A4.

This sequence belongs to the 'GDXG' lipolytic enzyme family. Interacts with the DELLA protein SLR1 in a GA-dependent manner, resulting in subsequent SLR1 degradation.

Its subcellular location is the nucleus. In terms of biological role, functions as a soluble gibberellin (GA) receptor. GA is an essential hormone that regulates growth and development in plants. Binds with high affinity the biologically active GAs such as GA1, GA3 and GA4, but has low or no affinity for the biologically inactive GAs. Upon GA-binding, it interacts with the DELLA protein SLR1, a repressor of GA signaling. This leads to SLR1 degradation by the proteasome, allowing the GA signaling pathway. This Oryza sativa subsp. japonica (Rice) protein is Gibberellin receptor GID1.